The following is a 163-amino-acid chain: Xanthine-guanine phosphoribosyltransferase (163 aa).

5-phospho-alpha-D-ribose 1-diphosphate contacts are provided by residues 43–44 (RG) and 95–103 (DDLADTGGT). Asp-96 contacts Mg(2+). Guanine-binding residues include Asp-99 and Ile-142. 2 residues coordinate xanthine: Asp-99 and Ile-142. GMP is bound by residues 99 to 103 (DTGGT) and 141 to 142 (WI).

The protein belongs to the purine/pyrimidine phosphoribosyltransferase family. XGPT subfamily. In terms of assembly, homotetramer. It depends on Mg(2+) as a cofactor.

It localises to the cell inner membrane. The enzyme catalyses GMP + diphosphate = guanine + 5-phospho-alpha-D-ribose 1-diphosphate. It carries out the reaction XMP + diphosphate = xanthine + 5-phospho-alpha-D-ribose 1-diphosphate. The catalysed reaction is IMP + diphosphate = hypoxanthine + 5-phospho-alpha-D-ribose 1-diphosphate. It participates in purine metabolism; GMP biosynthesis via salvage pathway; GMP from guanine: step 1/1. Its pathway is purine metabolism; XMP biosynthesis via salvage pathway; XMP from xanthine: step 1/1. In terms of biological role, purine salvage pathway enzyme that catalyzes the transfer of the ribosyl-5-phosphate group from 5-phospho-alpha-D-ribose 1-diphosphate (PRPP) to the N9 position of the 6-oxopurines guanine and xanthine to form the corresponding ribonucleotides GMP (guanosine 5'-monophosphate) and XMP (xanthosine 5'-monophosphate), with the release of PPi. To a lesser extent, also acts on hypoxanthine. The sequence is that of Xanthine-guanine phosphoribosyltransferase from Nitratidesulfovibrio vulgaris (strain ATCC 29579 / DSM 644 / CCUG 34227 / NCIMB 8303 / VKM B-1760 / Hildenborough) (Desulfovibrio vulgaris).